The sequence spans 482 residues: Type II methyltransferase M.AvaI (482 aa).

It belongs to the N(4)/N(6)-methyltransferase family. N(4) subfamily.

It carries out the reaction a 2'-deoxycytidine in DNA + S-adenosyl-L-methionine = an N(4)-methyl-2'-deoxycytidine in DNA + S-adenosyl-L-homocysteine + H(+). Functionally, an alpha subtype methylase that recognizes the double-stranded sequence 5'-CYCGRG-3', methylates C-1 on both strands, and protects the DNA from cleavage by the AvaI endonuclease. This is Type II methyltransferase M.AvaI from Anabaena variabilis.